Reading from the N-terminus, the 430-residue chain is Type 3 secretion system ATPase (430 aa).

162–167 (GCGKTF) provides a ligand contact to ATP.

Belongs to the ATPase alpha/beta chains family. T3SS ATPase subfamily. As to quaternary structure, the core secretion machinery of the T3SS is composed of approximately 20 different proteins, including cytoplasmic components, a base, an export apparatus and a needle. This subunit is part of the cytosolic complex. Forms homohexamers. Interacts directly with MxiN/SctL (stator protein) and Spa13/SctO (stalk protein). Can form a soluble complex with Spa33/SctQ, MxiN/SctL and MxiK/SctK.

It localises to the cytoplasm. It catalyses the reaction ATP + H2O + cellular proteinSide 1 = ADP + phosphate + cellular proteinSide 2.. With respect to regulation, oligomerization increases ATPase activity. Monomeric forms exhibit low-level ATPase activity by forming short-lived oligomers with active site contributions from at least two protomers. In contrast, oligomers exhibit enhanced ATP hydrolysis rates that likely result from multiple preformed active sites within the oligomeric complex. Oligomerization is important for both enzyme activation and T3SS function. Activity is regulated by MxiN/SctL, which differentially regulates the activity of the monomer and the oligomer: it up-regulates the ATPase activity of the monomer, while it down-regulates the activity of the oligomer. Its function is as follows. ATPase component of the type III secretion system (T3SS), also called injectisome, which is used to inject bacterial effector proteins into eukaryotic host cells. Acts as a molecular motor to provide the energy that is required for the export of proteins. Required for type III secretion apparatus (T3SA) formation, proper protein secretion, host cell invasion and virulence. May play a critical role in T3SS substrate recognition, disassembly of the effector/chaperone complex and unfolding of the effector in an ATP-dependent manner prior to secretion. This Shigella flexneri protein is Type 3 secretion system ATPase.